We begin with the raw amino-acid sequence, 452 residues long: MPSENPTDNCIASDLISTAVRILRLGPICDSCFGRQFAMLGTGMTNSERGRSIKTLMVMSADLQASDESREMLRALAPSCRQARLRLGVEGDDENCWVCLGQMYPERLEELADRAVDELKGIECSRFLVGTFMSGLLAENEELLLADGCSRHAEPMKSEINREVGKLIALKSGKQPDLNNPEVVVHLHLSDGHVEIQIQPLYIYGRYRKLQRGFPQTRWPCRVCGGRGCERCGNTGRMYQESVDELIRGPIVEAADAEDTVFHGAGREDIDARMLGSGRPFVVEVVRPRRRDLDLNALRDEINRRCSGKVEVSDLIFVDKSMVEMVKNERFEKTYEALIEFSVPVEEEKLKSALSRLIGFVEQRTPTRVSHRRADKVRRRAVHSAELEEFSGRTARITVRCDSGLYVKELISGDAGRTRPSLAELLESDARVVELDVIDVGGVPNAKITRIS.

Positions 71-200 (EMLRALAPSC…DGHVEIQIQP (130 aa)) constitute a THUMP domain. Asp269 acts as the Nucleophile in catalysis. Substrate is bound by residues Tyr335 and Tyr406.

Belongs to the pseudouridine synthase Pus10 family.

The catalysed reaction is uridine(54) in tRNA = pseudouridine(54) in tRNA. It catalyses the reaction uridine(55) in tRNA = pseudouridine(55) in tRNA. Its function is as follows. Responsible for synthesis of pseudouridine from uracil-54 and uracil-55 in the psi GC loop of transfer RNAs. The chain is tRNA pseudouridine synthase Pus10 from Methanothrix thermoacetophila (strain DSM 6194 / JCM 14653 / NBRC 101360 / PT) (Methanosaeta thermophila).